A 424-amino-acid chain; its full sequence is Serpin E3 (424 aa).

The N-terminal stretch at 1–20 (MPPFLITLFLFHSCCLRANG) is a signal peptide. Asn-46 is a glycosylation site (N-linked (GlcNAc...) asparagine). Residues 143 to 174 (DLSEPNSTAIQTSEGASRETAGGGPSEGPGGW) form a disordered region. The span at 146-157 (EPNSTAIQTSEG) shows a compositional bias: polar residues. Over residues 163 to 173 (AGGGPSEGPGG) the composition is skewed to gly residues.

It belongs to the serpin family.

It is found in the secreted. Its function is as follows. Probable serine protease inhibitor. The protein is Serpin E3 (SERPINE3) of Homo sapiens (Human).